Here is a 232-residue protein sequence, read N- to C-terminus: Platelet-activating factor acetylhydrolase IB subunit alpha1 (232 aa).

The residue at position 2 (serine 2) is an N-acetylserine. The residue at position 2 (serine 2) is a Phosphoserine. Catalysis depends on residues serine 47, aspartate 192, and histidine 195.

Belongs to the 'GDSL' lipolytic enzyme family. Platelet-activating factor acetylhydrolase IB beta/gamma subunits subfamily. As to quaternary structure, forms a catalytic dimer which is either homodimer (alpha1/alpha1 homodimer) or heterodimer with PAFAH1B2 (alpha1/alpha2 heterodimer). Component of the cytosolic (PAF-AH (I)) heterotetrameric enzyme, which is composed of PAFAH1B1 (beta), PAFAH1B2 (alpha2) and PAFAH1B3 (alpha1) subunits. The catalytic activity of the enzyme resides in the alpha1 (PAFAH1B3) and alpha2 (PAFAH1B2) subunits, whereas the beta subunit (PAFAH1B1) has regulatory activity. Trimer formation is not essential for the catalytic activity. Interacts with VLDLR; this interaction may modulate the Reelin pathway.

The protein resides in the cytoplasm. The enzyme catalyses a 1-O-alkyl-2-acetyl-sn-glycero-3-phosphocholine + H2O = a 1-O-alkyl-sn-glycero-3-phosphocholine + acetate + H(+). It carries out the reaction 1-O-hexadecyl-2-acetyl-sn-glycero-3-phosphocholine + H2O = 1-O-hexadecyl-sn-glycero-3-phosphocholine + acetate + H(+). It catalyses the reaction 1-O-hexadecyl-2-acetyl-sn-glycero-3-phosphate + H2O = 1-O-hexadecyl-sn-glycero-3-phosphate + acetate + H(+). With respect to regulation, beta subunit (PAFAH1B1) inhibits the acetylhydrolase activity of the alpha1/alpha1 catalytic homodimer. Functionally, alpha1 catalytic subunit of the cytosolic type I platelet-activating factor (PAF) acetylhydrolase (PAF-AH (I)) heterotetrameric enzyme that catalyzes the hydrolyze of the acetyl group at the sn-2 position of PAF and its analogs and modulates the action of PAF. The activity and substrate specificity of PAF-AH (I) are affected by its subunit composition. Both alpha1/alpha1 homodimer (PAFAH1B3/PAFAH1B3 homodimer) and alpha1/alpha2 heterodimer(PAFAH1B3/PAFAH1B2 heterodimer) hydrolyze 1-O-alkyl-2-acetyl-sn-glycero-3-phosphoric acid (AAGPA) more efficiently than PAF, but they have little hydrolytic activity towards 1-O-alkyl-2-acetyl-sn-glycero-3-phosphorylethanolamine (AAGPE). Plays an important role during the development of brain. The sequence is that of Platelet-activating factor acetylhydrolase IB subunit alpha1 from Bos taurus (Bovine).